Reading from the N-terminus, the 901-residue chain is Protein translocase subunit SecA (901 aa).

Residues Q87, 105 to 109, and D512 contribute to the ATP site; that span reads GEGKT. A disordered region spans residues 853–901; the sequence is QMQQLSHQTDENEAAEAIAAQTGDRKVGRNDPCPCGSGKKYKSCHGRLS. Residues C885, C887, C896, and H897 each contribute to the Zn(2+) site. Residues 891–901 show a composition bias toward basic residues; sequence KKYKSCHGRLS.

The protein belongs to the SecA family. In terms of assembly, monomer and homodimer. Part of the essential Sec protein translocation apparatus which comprises SecA, SecYEG and auxiliary proteins SecDF-YajC and YidC. The cofactor is Zn(2+).

The protein localises to the cell inner membrane. It is found in the cytoplasm. It carries out the reaction ATP + H2O + cellular proteinSide 1 = ADP + phosphate + cellular proteinSide 2.. Part of the Sec protein translocase complex. Interacts with the SecYEG preprotein conducting channel. Has a central role in coupling the hydrolysis of ATP to the transfer of proteins into and across the cell membrane, serving both as a receptor for the preprotein-SecB complex and as an ATP-driven molecular motor driving the stepwise translocation of polypeptide chains across the membrane. The chain is Protein translocase subunit SecA from Enterobacter sp. (strain 638).